Consider the following 112-residue polypeptide: Large ribosomal subunit protein uL1 (112 aa).

It belongs to the universal ribosomal protein uL1 family.

The chain is Large ribosomal subunit protein uL1 (rpl-10a) from Caenorhabditis remanei (Caenorhabditis vulgaris).